Consider the following 38-residue polypeptide: Large ribosomal subunit protein bL36 (38 aa).

Belongs to the bacterial ribosomal protein bL36 family.

The protein is Large ribosomal subunit protein bL36 of Pseudoalteromonas atlantica (strain T6c / ATCC BAA-1087).